The chain runs to 400 residues: Enoyl-[acyl-carrier-protein] reductase [NADH] (400 aa).

NAD(+) is bound by residues 48-53 (GSSSGY), 74-75 (FE), 111-112 (DA), and 139-140 (LA). Position 225 (tyrosine 225) interacts with substrate. Tyrosine 235 functions as the Proton donor in the catalytic mechanism. NAD(+) is bound by residues lysine 244 and 273 to 275 (VVT).

Belongs to the TER reductase family. As to quaternary structure, monomer.

The catalysed reaction is a 2,3-saturated acyl-[ACP] + NAD(+) = a (2E)-enoyl-[ACP] + NADH + H(+). Its pathway is lipid metabolism; fatty acid biosynthesis. Its function is as follows. Involved in the final reduction of the elongation cycle of fatty acid synthesis (FAS II). Catalyzes the reduction of a carbon-carbon double bond in an enoyl moiety that is covalently linked to an acyl carrier protein (ACP). This chain is Enoyl-[acyl-carrier-protein] reductase [NADH], found in Shewanella frigidimarina (strain NCIMB 400).